The following is a 507-amino-acid chain: Maturase K (507 aa).

Belongs to the intron maturase 2 family. MatK subfamily.

Its subcellular location is the plastid. The protein localises to the chloroplast. In terms of biological role, usually encoded in the trnK tRNA gene intron. Probably assists in splicing its own and other chloroplast group II introns. This is Maturase K from Liriodendron tulipifera (Tuliptree).